An 85-amino-acid polypeptide reads, in one-letter code: Large ribosomal subunit protein bL27 (85 aa).

A disordered region spans residues 1–21 (MAHKKGVGSSKNGRESESKRL).

Belongs to the bacterial ribosomal protein bL27 family.

The polypeptide is Large ribosomal subunit protein bL27 (Porphyromonas gingivalis (strain ATCC 33277 / DSM 20709 / CIP 103683 / JCM 12257 / NCTC 11834 / 2561)).